The primary structure comprises 494 residues: Probable malate:quinone oxidoreductase (494 aa).

The protein belongs to the MQO family. FAD is required as a cofactor.

The enzyme catalyses (S)-malate + a quinone = a quinol + oxaloacetate. Its pathway is carbohydrate metabolism; tricarboxylic acid cycle; oxaloacetate from (S)-malate (quinone route): step 1/1. This chain is Probable malate:quinone oxidoreductase, found in Kocuria rhizophila (strain ATCC 9341 / DSM 348 / NBRC 103217 / DC2201).